Here is a 355-residue protein sequence, read N- to C-terminus: tRNA pseudouridine synthase D (355 aa).

Catalysis depends on D84, which acts as the Nucleophile. Positions 160 to 306 (GVPNYFGLQR…MAHERRILRL (147 aa)) constitute a TRUD domain.

This sequence belongs to the pseudouridine synthase TruD family.

It catalyses the reaction uridine(13) in tRNA = pseudouridine(13) in tRNA. Responsible for synthesis of pseudouridine from uracil-13 in transfer RNAs. The sequence is that of tRNA pseudouridine synthase D from Pseudomonas aeruginosa (strain LESB58).